A 184-amino-acid chain; its full sequence is Acireductone dioxygenase (184 aa).

Residues His97, His99, Glu103, and His141 each contribute to the Fe(2+) site. Positions 97, 99, 103, and 141 each coordinate Ni(2+).

It belongs to the acireductone dioxygenase (ARD) family. In terms of assembly, monomer. It depends on Fe(2+) as a cofactor. The cofactor is Ni(2+).

The enzyme catalyses 1,2-dihydroxy-5-(methylsulfanyl)pent-1-en-3-one + O2 = 3-(methylsulfanyl)propanoate + CO + formate + 2 H(+). It carries out the reaction 1,2-dihydroxy-5-(methylsulfanyl)pent-1-en-3-one + O2 = 4-methylsulfanyl-2-oxobutanoate + formate + 2 H(+). Its pathway is amino-acid biosynthesis; L-methionine biosynthesis via salvage pathway; L-methionine from S-methyl-5-thio-alpha-D-ribose 1-phosphate: step 5/6. Its function is as follows. Catalyzes 2 different reactions between oxygen and the acireductone 1,2-dihydroxy-3-keto-5-methylthiopentene (DHK-MTPene) depending upon the metal bound in the active site. Fe-containing acireductone dioxygenase (Fe-ARD) produces formate and 2-keto-4-methylthiobutyrate (KMTB), the alpha-ketoacid precursor of methionine in the methionine recycle pathway. Ni-containing acireductone dioxygenase (Ni-ARD) produces methylthiopropionate, carbon monoxide and formate, and does not lie on the methionine recycle pathway. This chain is Acireductone dioxygenase, found in Parvibaculum lavamentivorans (strain DS-1 / DSM 13023 / NCIMB 13966).